A 553-amino-acid polypeptide reads, in one-letter code: uncharacterized protein (553 aa).

The 84-residue stretch at 26-109 (RFEFVGWGSR…YDLLEKHYKE (84 aa)) folds into the SWIB/MDM2 domain. One can recognise a Plus3 domain in the interval 150–275 (AIVSDNIKLL…KAKKLHKDQT (126 aa)). Disordered regions lie at residues 335–357 (QNPE…SESP) and 447–482 (PVNN…ETLD). The span at 343-353 (EAHKSDNEQRL) shows a compositional bias: basic and acidic residues. Residues 447–461 (PVNNVDNGSQVQPNP) show a composition bias toward polar residues. Acidic residues predominate over residues 466 to 480 (ELSDDDEDDNGDGET). The 55-residue stretch at 497 to 551 (KLNWLYKDPQGLVQGPFSLTQLKAWSDAEYFTKQFRVWMTGESMESAVLLTDVLR) folds into the GYF domain.

This is an uncharacterized protein from Arabidopsis thaliana (Mouse-ear cress).